A 447-amino-acid polypeptide reads, in one-letter code: MITLKEALNKSENELKEIKTLLRQRVKENIELNAYIGEINESGSGVPILIKDNINVKGWEITCASKILKGYVSPYNASVITKLHENKMCAFGRANMDEFAMGSTTESSCYGRVKNPLDTSRVPGGSSGGSAAAVAAGLAIASLGSDTGGSIRQPAGFCGCVGLKPSYGRVSRYGLIAYSSSLDQIGPITQNVEDAALLLDAISGYDKQDSTSANLPSLNTFKDLDPNARYKVAILKDFLKDATPQIQEAYNHTIKILESMGHTIVEKSMLDTRYHISAYYIICTAEASSNLARFDGIRYGTRSESKNLKDVYLNTRSAYFGEEVKRRILLGSFVLSSGYYDAYYLKAQQVRKKICADYESIFNECDSILLPIAPSVAPKFGSTHSSLEMYLSDIYTIGVNLAGLPALCMPVSKDKNGLSIGMQFIGAKFKEQNILNIAYGLEKEINN.

Active-site charge relay system residues include K51 and S126. The active-site Acyl-ester intermediate is the S150.

The protein belongs to the amidase family. GatA subfamily. Heterotrimer of A, B and C subunits.

The enzyme catalyses L-glutamyl-tRNA(Gln) + L-glutamine + ATP + H2O = L-glutaminyl-tRNA(Gln) + L-glutamate + ADP + phosphate + H(+). Allows the formation of correctly charged Gln-tRNA(Gln) through the transamidation of misacylated Glu-tRNA(Gln) in organisms which lack glutaminyl-tRNA synthetase. The reaction takes place in the presence of glutamine and ATP through an activated gamma-phospho-Glu-tRNA(Gln). This Helicobacter hepaticus (strain ATCC 51449 / 3B1) protein is Glutamyl-tRNA(Gln) amidotransferase subunit A.